The primary structure comprises 200 residues: Recombination protein RecR (200 aa).

The C4-type zinc finger occupies 57–72 (CRQCRTLTEQELCPQC). Residues 80-175 (TQLCVVEGPT…VASRIAHGVP (96 aa)) enclose the Toprim domain.

The protein belongs to the RecR family.

Its function is as follows. May play a role in DNA repair. It seems to be involved in an RecBC-independent recombinational process of DNA repair. It may act with RecF and RecO. This is Recombination protein RecR from Pseudomonas putida (strain ATCC 700007 / DSM 6899 / JCM 31910 / BCRC 17059 / LMG 24140 / F1).